The following is a 199-amino-acid chain: Recombination protein RecR (199 aa).

The segment at 58 to 73 (CSICNNITDVDPCTYC) adopts a C4-type zinc-finger fold. One can recognise a Toprim domain in the interval 81–176 (QVICVVEEPT…RVTRIATGVP (96 aa)).

Belongs to the RecR family.

Its function is as follows. May play a role in DNA repair. It seems to be involved in an RecBC-independent recombinational process of DNA repair. It may act with RecF and RecO. This Koribacter versatilis (strain Ellin345) protein is Recombination protein RecR.